The following is a 473-amino-acid chain: MVAKTLYDKLWDAHLVHESDDGSALIYIDRHIVHEVTSPQAFDGLRMAGRKPWRVDSILATPDHNVPTTQKERAHGVSGIQDPVSLIQVQTLDDNCDEFGITEFKINDSRQGIVHVVGPESGACLPGMTIVCGDSHTATNGALGALAHGIGTSEVEHVMATQCLVAKKMKNMLIKVDGTLGLGVTPKDVVLAIIAKIGTAGGTGYAMEFGGQVFRDMSMEGRLTVCNMAIEAGARAGMVAVDQTTIDYVKGRPYAPSGDVWEQAVANWRELVSDEGAHFDAVIEIDGASIRPQVSWGTSPEMVVSVEDKVPDPANEPDPVKRKDMIRALEYMGLQANQPITSIYVDRVFIGSCTNSRIEDIRAAAEVVKGKQKAANVKEAIVVPGSGVVKAQAEAEGLDKIFTAAGIEWREPGCSMCLAMNADKLGAGEHCASTSNRNFEGRQGYGGRTHLVSPAMAAAAAIAGHFVDVRSFN.

[4Fe-4S] cluster-binding residues include C353, C414, and C417.

It belongs to the aconitase/IPM isomerase family. LeuC type 1 subfamily. As to quaternary structure, heterodimer of LeuC and LeuD. The cofactor is [4Fe-4S] cluster.

It catalyses the reaction (2R,3S)-3-isopropylmalate = (2S)-2-isopropylmalate. The protein operates within amino-acid biosynthesis; L-leucine biosynthesis; L-leucine from 3-methyl-2-oxobutanoate: step 2/4. Catalyzes the isomerization between 2-isopropylmalate and 3-isopropylmalate, via the formation of 2-isopropylmaleate. The sequence is that of 3-isopropylmalate dehydratase large subunit from Cellvibrio japonicus (strain Ueda107) (Pseudomonas fluorescens subsp. cellulosa).